Reading from the N-terminus, the 1021-residue chain is MQGRADAGEADEEAGAGSGSEAEEDALWERIEGVRHRLTRALNPAKLTPYLRQCRVLDEQDEEEVLSTYRFPCRANRTGRLIDILRCRGKRGFEAFLEALEFYYPEHFTLLTGQEPAQRCSMILDEEGPEGLTQFLMTEVRRLREARKSQLHREQQLQARGRALEEERAGLEQRLREQQQAQERCQRLREDWEAGSLELLRLKDENYMIAMRLAQLSEEKNSAVLRSRDLQLAVDQLKLKVSRLEEECALLRRARGPPPGAEEKEREPDGADLLSELRAENQRLTASLQELQEGLQQEMSRPGAAGSERILLDILEHDWREAQDSRQELCQKLHAVQGELQWAEELRDKYLQEMEDLRLKHRTLLKDCDLYKHRMATVLAQLEEIEKERDQAIQSRDRIQLQYSQSLIEKDQYRKQVRGLEAERDELLTTVTSLEGTKAMLEAQLQRTQGGSCLKACASSHSLCSNLSSTWSLSEFPSPLGGPEATGEAGGSEPHTSEEATDSEKEINRLSILPFPPSAGSILRRQREEDPEPPKRSFSSMSDITGSVTLKPWSPGLSSSSSSDSVWPLGKPEGLLARGCGLDFLNRSLAIRVSGWSPPAGLDPQDKSPDSMPGLGDRWSGAVVRRVLSGPGSARTEQKEPRAEGTGLEGAGLEAEAQQRTLPWNQSSTLPFLLDSKACHSFHEALDAWAKGPGAEPFYIRANFSLPERSDPHALCVKAQEILRLVDPAHKRRQEWFCTRVDTLTLRDLDRGTVPNYQRAQQLLEVQEKYLISSRHRSPRSNLKKRALGLVRPKPAGGTAGDSAEQLPAEPCSELERSLKPYSLVRPLLVSALRPVVLLPECLAPRLIRNLLDLPSSRLDFQVCPAESLSGEEQCTSSAPGAPKAWPATAGLGSRIRAIQESVGKKHCLLELGARGVRELVHSEVYPIVIHVEVTEKNVREIRGLLGRPGWRDSELLRQCRGSEQWLWGLPCSWVQVPAHAWGHAEELAKVVRGRILQEQARLVWVERGSSRGGSGSSSEA.

Residues 1-24 (MQGRADAGEADEEAGAGSGSEAEE) form a disordered region. Ser18 is subject to Phosphoserine. One can recognise a CARD domain in the interval 23–115 (EEDALWERIE…EHFTLLTGQE (93 aa)). Positions 138-450 (TEVRRLREAR…LEAQLQRTQG (313 aa)) form a coiled coil. 3 disordered regions span residues 475 to 544 (EFPS…MSDI), 597 to 616 (SPPAGLDPQDKSPDSMPGLG), and 790 to 809 (LVRPKPAGGTAGDSAEQLPA). 2 stretches are compositionally biased toward basic and acidic residues: residues 495–508 (HTSEEATDSEKEIN) and 525–535 (RQREEDPEPPK).

As to quaternary structure, CARD10 and BCL10 bind to each other by CARD-CARD interaction. They both participate in a complex with MALT1, where MALT1 binds to BCL10. Interacts with TMEM43; this interaction is essential for EGFR-mediated NF-kappa-B activation. As to expression, highly expressed in kidney, heart followed by brain, lung, liver, skeletal muscle and testis.

Scaffold protein that plays an important role in mediating the activation of NF-kappa-B via BCL10 or EGFR. In Mus musculus (Mouse), this protein is Caspase recruitment domain-containing protein 10 (Card10).